The primary structure comprises 556 residues: Polypeptide N-acetylgalactosaminyltransferase 13 (556 aa).

The Cytoplasmic segment spans residues M1–F4. The chain crosses the membrane as a helical; Signal-anchor for type II membrane protein span at residues V5 to Y27. At F28–T556 the chain is on the lumenal side. Residues N94 and N116 are each glycosylated (N-linked (GlcNAc...) asparagine). 5 cysteine pairs are disulfide-bonded: C105–C338, C329–C407, C441–C458, C481–C496, and C522–C539. Positions L114–R224 are catalytic subdomain A. Substrate contacts are provided by D155 and R185. Residues D208 and H210 each contribute to the Mn(2+) site. The segment at P284–R346 is catalytic subdomain B. Residue W315 coordinates substrate. H343 serves as a coordination point for Mn(2+). 2 residues coordinate substrate: R346 and Y351. One can recognise a Ricin B-type lectin domain in the interval Y428 to R550. Residue N551 is glycosylated (N-linked (GlcNAc...) asparagine).

Belongs to the glycosyltransferase 2 family. GalNAc-T subfamily. Mn(2+) is required as a cofactor. As to expression, specifically expressed in neuronal cells. Not expressed in glial cells such as astrocytes. Expressed at low level.

It localises to the golgi apparatus membrane. The catalysed reaction is L-seryl-[protein] + UDP-N-acetyl-alpha-D-galactosamine = a 3-O-[N-acetyl-alpha-D-galactosaminyl]-L-seryl-[protein] + UDP + H(+). It carries out the reaction L-threonyl-[protein] + UDP-N-acetyl-alpha-D-galactosamine = a 3-O-[N-acetyl-alpha-D-galactosaminyl]-L-threonyl-[protein] + UDP + H(+). Its pathway is protein modification; protein glycosylation. Functionally, catalyzes the initial reaction in O-linked oligosaccharide biosynthesis, the transfer of an N-acetyl-D-galactosamine (GalNAc) residue from UDP-GalNAc to a serine or threonine residue on the protein receptor. Generates GalNAc-O-Ser/Thr structure also known as Tn antigen, which itself is immunogenic but also serves as a precursor for the synthesis of different mucin-type O-glycan core structures. Contributes to the synthesis of O-linked glycans on mucins and proteoglycans of the central nervous system. Can glycosylate both unmodified peptides and glycopeptides that already contain an O-linked GalNAc sugar. Transfers GalNAc to Thr-/Ser-rich tandem repeats GTTPSPVPTTSTTSAP of MUC5AC. Transfers GalNAc to three consecutive serine/threonine residues on SDC3 forming a triplet-Tn epitope expressed in Purkinje cells of the developing brain. May promote neurogenesis through glycosylation and stabilization of PDPN. This Mus musculus (Mouse) protein is Polypeptide N-acetylgalactosaminyltransferase 13 (Galnt13).